The following is a 258-amino-acid chain: Peptidase inhibitor 15 (258 aa).

The signal sequence occupies residues 1-21 (MTIIAAISCVFLFSILCETSA). A propeptide spanning residues 22–60 (LVLPNSTDLLLSNNNFTDIETALAAHLDSAKIPKARRKR) is cleaved from the precursor. N-linked (GlcNAc...) asparagine glycosylation is found at N26, N36, and N124. Residues 71–211 (LDYHNQVRGK…RRAVYLVCNY (141 aa)) enclose the SCP domain.

The protein belongs to the CRISP family.

The protein localises to the secreted. In terms of biological role, serine protease inhibitor which displays weak inhibitory activity against trypsin. May play a role in facial patterning during embryonic development. This chain is Peptidase inhibitor 15 (PI15), found in Gallus gallus (Chicken).